A 239-amino-acid polypeptide reads, in one-letter code: Phosphoribosylaminoimidazole-succinocarboxamide synthase (239 aa).

This sequence belongs to the SAICAR synthetase family.

It catalyses the reaction 5-amino-1-(5-phospho-D-ribosyl)imidazole-4-carboxylate + L-aspartate + ATP = (2S)-2-[5-amino-1-(5-phospho-beta-D-ribosyl)imidazole-4-carboxamido]succinate + ADP + phosphate + 2 H(+). The protein operates within purine metabolism; IMP biosynthesis via de novo pathway; 5-amino-1-(5-phospho-D-ribosyl)imidazole-4-carboxamide from 5-amino-1-(5-phospho-D-ribosyl)imidazole-4-carboxylate: step 1/2. This Nitratiruptor sp. (strain SB155-2) protein is Phosphoribosylaminoimidazole-succinocarboxamide synthase.